A 385-amino-acid chain; its full sequence is MKLERKVYIAGVGETKFGRHEVDFDVLGRAAALEALKASNIDRPTMVQSAYVGNGTNGMVTGQTVLKDLGMCGHLPIINVESACSAGGMAIHLAVRDVALGLADVAIGIGCENHTLHMAQGTAFATAMSDIETVHGAVMTGKYAMRAQRYMYETGATAEDLAMITVKNRRHATNNPYAWFKGEISIEEVVNSRVVASPLTLQQCCGIADGAGAVVVCSEEMVKKLGIKKPIRVAGSVVRSGPYHNRPRDITGDDITEETAHQLYEESGIGPEDVNIVELHDAFTIAELLYYECLGLCPKGEGLKFLRDGNATHGGKCVVSPRGGMLSYGHPIGASGAAQIAASVKQMRNQCPGYQVEPVPRVAMTHVTGGGCRARNTRHARCTCW.

Arg19 contacts CoA. Cys84 acts as the Acyl-thioester intermediate in catalysis. 4 residues coordinate CoA: Gly121, Arg193, Cys204, and Cys205.

The protein belongs to the thiolase-like superfamily. Thiolase family. In terms of assembly, heterotetramer composed of two BbsA subunits and two BbsB subunits. BbsB forms homodimeric subcomplexes. Both BbsA and BbsB are essential for enzymatic activity.

It carries out the reaction (S)-2-benzoylsuccinyl-CoA + CoA = benzoyl-CoA + succinyl-CoA. It participates in xenobiotic degradation; toluene degradation. In terms of biological role, component of the BbsAB thiolase complex, which catalyzes the thiolytic cleavage of (S)-2-benzoylsuccinyl-CoA to succinyl-CoA and benzoyl-CoA, the final step of anaerobic toluene metabolism. This Thauera aromatica protein is Benzoylsuccinyl-CoA thiolase subunit BbsB.